Consider the following 403-residue polypeptide: RNA-binding motif, single-stranded-interacting protein 1 (403 aa).

The tract at residues 30 to 56 is disordered; the sequence is PAHPMAPPSPSTTSSNNNSSSSSNSGW. The segment covering 40-54 has biased composition (low complexity); the sequence is STTSSNNNSSSSSNS. RRM domains are found at residues 62–135 and 141–226; these read TNLY…MAKQ and TNLY…FADG. T208 bears the Phosphothreonine mark.

The protein resides in the nucleus. Single-stranded DNA binding protein that interacts with the region upstream of the MYC gene. Binds specifically to the DNA sequence motif 5'-[AT]CT[AT][AT]T-3'. Probably has a role in DNA replication. The polypeptide is RNA-binding motif, single-stranded-interacting protein 1 (Rattus norvegicus (Rat)).